Reading from the N-terminus, the 171-residue chain is Serine acetyltransferase (171 aa).

It belongs to the transferase hexapeptide repeat family.

The protein resides in the cytoplasm. It carries out the reaction L-serine + acetyl-CoA = O-acetyl-L-serine + CoA. Its pathway is amino-acid biosynthesis; L-cysteine biosynthesis; L-cysteine from L-serine: step 1/2. This chain is Serine acetyltransferase (cysE), found in Helicobacter pylori (strain J99 / ATCC 700824) (Campylobacter pylori J99).